The following is a 237-amino-acid chain: Ribosomal RNA small subunit methyltransferase G (237 aa).

S-adenosyl-L-methionine is bound by residues Gly-78, Phe-83, 129–130 (AE), and Arg-148. Positions 218–237 (KKETPNKFPRKAGMPNKRPL) are disordered.

The protein belongs to the methyltransferase superfamily. RNA methyltransferase RsmG family.

It is found in the cytoplasm. Specifically methylates the N7 position of a guanine in 16S rRNA. The polypeptide is Ribosomal RNA small subunit methyltransferase G (Streptococcus suis (strain 98HAH33)).